Here is a 288-residue protein sequence, read N- to C-terminus: F420-non-reducing hydrogenase vhu subunit G (288 aa).

This sequence belongs to the [NiFe]/[NiFeSe] hydrogenase small subunit family. As to quaternary structure, the F420-non-reducing hydrogenase vhu is composed of four subunits; VhuA, VhuD, VhuG and VhuU.

The sequence is that of F420-non-reducing hydrogenase vhu subunit G (vhuG) from Methanocaldococcus jannaschii (strain ATCC 43067 / DSM 2661 / JAL-1 / JCM 10045 / NBRC 100440) (Methanococcus jannaschii).